Consider the following 432-residue polypeptide: MKFTLVATVLLTFSLSAFAVEYPVLTIASPDQVGFDSQKLHRLDGWIQNQIDAGYPSINLLVIKDNHIVLQKAWGYAKKYDGSTLLAHPIRATTNTMYDLASNTKMYATNFALQKLVYEGKIDVNDLVSKYIPGFKDMPGDKIKGKDKLRIIDILHHVAGFPADPQYPNKNVAGKLFSQSKSTTLEMIKKTPLEYQPGSKHIYSDVDYMILGFIIESITAMPLDRYVETTIYKPLGLKHTVFNPLMKGFTPPQIAATELHGNTRDGVIHFPNIRTNTLWGQVHDEKAWYSMGGVSGHAGLFSDTHDMAVLMQVMLNGGGYGNLKLFDDKTVAQFTRHSPEDATFGLGWRVNGNASMTPTFGVLASPQTYGHTGWTGTLTSIDPVNHMAIVILGNRPHSPVANPKVNPNVFVSGLLPAATYGWIVDQIYGSLK.

A helical; Signal-anchor transmembrane segment spans residues 7 to 25 (ATVLLTFSLSAFAVEYPVL).

Belongs to the peptidase S12 family. YfeW subfamily.

It is found in the cell inner membrane. The enzyme catalyses Preferential cleavage: (Ac)2-L-Lys-D-Ala-|-D-Ala. Also transpeptidation of peptidyl-alanyl moieties that are N-acyl substituents of D-alanine.. This chain is Putative D-alanyl-D-alanine carboxypeptidase, found in Salmonella enteritidis PT4 (strain P125109).